The sequence spans 568 residues: Urease subunit alpha (568 aa).

Residues H134, H136, and K217 each contribute to the Ni(2+) site. K217 carries the N6-carboxylysine modification. H219 provides a ligand contact to substrate. Residues H246 and H272 each contribute to the Ni(2+) site. H320 (proton donor) is an active-site residue. Residue D360 coordinates Ni(2+).

The protein belongs to the metallo-dependent hydrolases superfamily. Urease alpha subunit family. As to quaternary structure, heterotrimer of UreA (gamma), UreB (beta) and UreC (alpha) subunits. Three heterotrimers associate to form the active enzyme. The cofactor is Ni cation. Post-translationally, carboxylation allows a single lysine to coordinate two nickel ions.

Its subcellular location is the cytoplasm. The catalysed reaction is urea + 2 H2O + H(+) = hydrogencarbonate + 2 NH4(+). It participates in nitrogen metabolism; urea degradation; CO(2) and NH(3) from urea (urease route): step 1/1. This chain is Urease subunit alpha, found in Marinomonas sp. (strain MWYL1).